The primary structure comprises 491 residues: MSNPIENTENSQNTSSSRFLRNVQRLALNNVTNTTFQKSNANNPALTNFKSTLNSVKKEGSRIPQFTRESVSRSTAAQEEKRTLKENGIQLPKNNLLDDKENQDPSSQQFGALTSIKEGRAELPANISLQESSSAKEIIQHDPLKGVGSSTEVVHNSVENEKLHPARSQLQVRNTESETDSGKKRPISTIVEQELPKKFKVCDENGKEEYEWEDLDAEDVNDPFMVSEYVNDIFEYLHQLEVITLPKKEDLYQHRNIHQNRDILVNWLVKIHNKFGLLPETLYLAINIMDRFLGKELVQLDKLQLVGTSCLFIASKYEEVYSPSIKHFASETDGACTEDEIKEGEKFILKTLKFNLNYPNPMNFLRRISKADDYDIQSRTLAKFLLEISLVDFRFIGILPSLCAAAAMFMSRKMLGKGKWDGNLIHYSGGYTKEELAPVCHMIMDYLVSPIVHDEFHRKYQSRRFMKASIISVQWALKVRKNGYDIMTLHE.

S2 bears the N-acetylserine mark. Disordered regions lie at residues 59 to 107 (EGSR…DPSS) and 164 to 184 (HPARSQLQVRNTESETDSGKK). The span at 67–77 (TRESVSRSTAA) shows a compositional bias: polar residues.

It belongs to the cyclin family. Cyclin AB subfamily. In terms of assembly, interacts with NAP1.

In terms of biological role, essential for the control of the cell cycle at the G2/M (mitosis) transition. Interacts with the CDC2 protein kinase to form MPF. G2/M cyclins accumulate steadily during G2 and are abruptly destroyed at mitosis. This Saccharomyces cerevisiae (strain ATCC 204508 / S288c) (Baker's yeast) protein is G2/mitotic-specific cyclin-2 (CLB2).